The following is a 794-amino-acid chain: cAMP and cAMP-inhibited cGMP 3',5'-cyclic phosphodiesterase 10A (794 aa).

Residues 296 to 297 (RC), 340 to 341 (IA), threonine 374, glutamine 393, and histidine 525 each bind 3',5'-cyclic AMP. The PDEase domain maps to 452–769 (TSEEWQGLMH…NQWEKVIRGE (318 aa)). The active-site Proton donor is histidine 525. Residue histidine 525 coordinates 3',5'-cyclic GMP. A divalent metal cation is bound by residues histidine 529, histidine 563, aspartate 564, and aspartate 674. Position 726 (glutamine 726) interacts with 3',5'-cyclic AMP. Glutamine 726 contacts 3',5'-cyclic GMP.

The protein belongs to the cyclic nucleotide phosphodiesterase family. In terms of assembly, homodimer. Requires a divalent metal cation as cofactor. As to expression, detected in striatum and testis (at protein level). Detected in whole brain, hippocampus, olfactory bulb, striatum neurons and testis.

It localises to the cytoplasm. Its subcellular location is the cytosol. It carries out the reaction a nucleoside 3',5'-cyclic phosphate + H2O = a nucleoside 5'-phosphate + H(+). The catalysed reaction is 3',5'-cyclic AMP + H2O = AMP + H(+). The enzyme catalyses 3',5'-cyclic GMP + H2O = GMP + H(+). The protein operates within purine metabolism; 3',5'-cyclic AMP degradation; AMP from 3',5'-cyclic AMP: step 1/1. Its pathway is purine metabolism; 3',5'-cyclic GMP degradation; GMP from 3',5'-cyclic GMP: step 1/1. Inhibited by dipyridamole and moderately by IBMX, zaprinast and rolipram. In terms of biological role, plays a role in signal transduction by regulating the intracellular concentration of cyclic nucleotides. Can hydrolyze both cAMP and cGMP, but has higher affinity for cAMP and is more efficient with cAMP as substrate. The polypeptide is cAMP and cAMP-inhibited cGMP 3',5'-cyclic phosphodiesterase 10A (Pde10a) (Rattus norvegicus (Rat)).